The following is a 416-amino-acid chain: Probable glucan 1,3-beta-glucosidase A (416 aa).

Residues 1-22 (MFVESAKKALLALSLLAASAQA) form the signal peptide. Asparagine 183 is a glycosylation site (N-linked (GlcNAc...) asparagine). Glutamate 210 (proton donor) is an active-site residue. 2 disulfides stabilise this stretch: cysteine 290–cysteine 415 and cysteine 316–cysteine 342. Glutamate 308 functions as the Nucleophile in the catalytic mechanism.

This sequence belongs to the glycosyl hydrolase 5 (cellulase A) family. As to quaternary structure, monomer. Mn(2+) is required as a cofactor.

It is found in the secreted. It catalyses the reaction Successive hydrolysis of beta-D-glucose units from the non-reducing ends of (1-&gt;3)-beta-D-glucans, releasing alpha-glucose.. Beta-glucanases participate in the metabolism of beta-glucan, the main structural component of the cell wall. It could also function biosynthetically as a transglycosylase. The protein is Probable glucan 1,3-beta-glucosidase A (exgA) of Aspergillus niger (strain ATCC MYA-4892 / CBS 513.88 / FGSC A1513).